We begin with the raw amino-acid sequence, 201 residues long: Pyridoxal 5'-phosphate synthase subunit PdxT (201 aa).

G51–S53 provides a ligand contact to L-glutamine. The active-site Nucleophile is C83. L-glutamine is bound by residues R112 and I141–R142. Catalysis depends on charge relay system residues H182 and E184.

The protein belongs to the glutaminase PdxT/SNO family. In terms of assembly, in the presence of PdxS, forms a dodecamer of heterodimers. Only shows activity in the heterodimer.

The enzyme catalyses aldehydo-D-ribose 5-phosphate + D-glyceraldehyde 3-phosphate + L-glutamine = pyridoxal 5'-phosphate + L-glutamate + phosphate + 3 H2O + H(+). It catalyses the reaction L-glutamine + H2O = L-glutamate + NH4(+). It participates in cofactor biosynthesis; pyridoxal 5'-phosphate biosynthesis. Its function is as follows. Catalyzes the hydrolysis of glutamine to glutamate and ammonia as part of the biosynthesis of pyridoxal 5'-phosphate. The resulting ammonia molecule is channeled to the active site of PdxS. The sequence is that of Pyridoxal 5'-phosphate synthase subunit PdxT from Thermobifida fusca (strain YX).